A 151-amino-acid chain; its full sequence is UPF0251 protein Ctha_0452 (151 aa).

The protein belongs to the UPF0251 family.

The sequence is that of UPF0251 protein Ctha_0452 from Chloroherpeton thalassium (strain ATCC 35110 / GB-78).